The chain runs to 271 residues: 4-hydroxy-tetrahydrodipicolinate reductase (271 aa).

NAD(+) contacts are provided by residues 10–15 (GAGGRM), E36, 100–102 (GTT), and 124–127 (SGNM). H157 acts as the Proton donor/acceptor in catalysis. H158 lines the (S)-2,3,4,5-tetrahydrodipicolinate pocket. Residue K161 is the Proton donor of the active site. A (S)-2,3,4,5-tetrahydrodipicolinate-binding site is contributed by 167–168 (GT).

Belongs to the DapB family.

It is found in the cytoplasm. It catalyses the reaction (S)-2,3,4,5-tetrahydrodipicolinate + NAD(+) + H2O = (2S,4S)-4-hydroxy-2,3,4,5-tetrahydrodipicolinate + NADH + H(+). The catalysed reaction is (S)-2,3,4,5-tetrahydrodipicolinate + NADP(+) + H2O = (2S,4S)-4-hydroxy-2,3,4,5-tetrahydrodipicolinate + NADPH + H(+). It participates in amino-acid biosynthesis; L-lysine biosynthesis via DAP pathway; (S)-tetrahydrodipicolinate from L-aspartate: step 4/4. In terms of biological role, catalyzes the conversion of 4-hydroxy-tetrahydrodipicolinate (HTPA) to tetrahydrodipicolinate. This is 4-hydroxy-tetrahydrodipicolinate reductase from Rhodopseudomonas palustris (strain BisB18).